We begin with the raw amino-acid sequence, 385 residues long: cAMP-dependent protein kinase, catalytic subunit-like (385 aa).

Positions 63 to 317 (LERIVTIGKG…TQDVKDHKWF (255 aa)) constitute a Protein kinase domain. ATP contacts are provided by residues 69–77 (IGKGTFGRV) and K92. D186 serves as the catalytic Proton acceptor. Positions 318 to 385 (EKVNWDDTLH…QRERDLFAEW (68 aa)) constitute an AGC-kinase C-terminal domain.

This sequence belongs to the protein kinase superfamily. Ser/Thr protein kinase family. cAMP subfamily.

The catalysed reaction is L-seryl-[protein] + ATP = O-phospho-L-seryl-[protein] + ADP + H(+). The enzyme catalyses L-threonyl-[protein] + ATP = O-phospho-L-threonyl-[protein] + ADP + H(+). The polypeptide is cAMP-dependent protein kinase, catalytic subunit-like (Caenorhabditis briggsae).